Here is a 472-residue protein sequence, read N- to C-terminus: Cysteine--tRNA ligase (472 aa).

Cysteine 28 is a Zn(2+) binding site. The 'HIGH' region motif lies at 30 to 40 (PTVYNYIHIGN). Residues cysteine 212, histidine 237, and glutamate 241 each contribute to the Zn(2+) site. A 'KMSKS' region motif is present at residues 271 to 275 (KMSKS). An ATP-binding site is contributed by lysine 274.

It belongs to the class-I aminoacyl-tRNA synthetase family. Monomer. Zn(2+) serves as cofactor.

Its subcellular location is the cytoplasm. It carries out the reaction tRNA(Cys) + L-cysteine + ATP = L-cysteinyl-tRNA(Cys) + AMP + diphosphate. This Limosilactobacillus fermentum (strain NBRC 3956 / LMG 18251) (Lactobacillus fermentum) protein is Cysteine--tRNA ligase.